The sequence spans 512 residues: ADP,ATP carrier protein 4 (512 aa).

The next 11 helical transmembrane spans lie at 34–54 (ISKF…QNLI), 71–91 (ISFL…VIYV), 102–122 (IFYL…YVIF), 157–177 (FSLF…LLFW), 192–212 (FYPL…HFLE), 231–251 (FHTL…IVSI), 296–316 (LIAT…GPWK), 330–350 (AAFI…FVLL), 361–381 (FTSA…FFAV), 390–410 (LIIA…IGAI), and 476–496 (SISI…IWAT).

Belongs to the ADP/ATP translocase tlc family.

It is found in the cell membrane. In terms of biological role, provides the rickettsial cell with host ATP in exchange for rickettsial ADP. This is an obligate exchange system. This energy acquiring activity is an important component of rickettsial parasitism. The chain is ADP,ATP carrier protein 4 (tlcD) from Rickettsia prowazekii (strain Madrid E).